A 351-amino-acid chain; its full sequence is Glycerol-1-phosphate dehydrogenase [NAD(P)+] (351 aa).

NAD(+) is bound by residues 97-101 and 119-122; these read GKVID and TSPS. Aspartate 124 contributes to the substrate binding site. Serine 128 is an NAD(+) binding site. Aspartate 171 lines the substrate pocket. Aspartate 171 and histidine 251 together coordinate Zn(2+). Histidine 255 contributes to the substrate binding site. A Zn(2+)-binding site is contributed by histidine 267.

It belongs to the glycerol-1-phosphate dehydrogenase family. As to quaternary structure, homodimer. Zn(2+) serves as cofactor.

It localises to the cytoplasm. The enzyme catalyses sn-glycerol 1-phosphate + NAD(+) = dihydroxyacetone phosphate + NADH + H(+). The catalysed reaction is sn-glycerol 1-phosphate + NADP(+) = dihydroxyacetone phosphate + NADPH + H(+). It participates in membrane lipid metabolism; glycerophospholipid metabolism. In terms of biological role, catalyzes the NAD(P)H-dependent reduction of dihydroxyacetonephosphate (DHAP or glycerone phosphate) to glycerol 1-phosphate (G1P). The G1P thus generated is used as the glycerophosphate backbone of phospholipids in the cellular membranes of Archaea. In Saccharolobus islandicus (strain Y.N.15.51 / Yellowstone #2) (Sulfolobus islandicus), this protein is Glycerol-1-phosphate dehydrogenase [NAD(P)+].